A 204-amino-acid chain; its full sequence is Leucyl/phenylalanyl-tRNA--protein transferase (204 aa).

This sequence belongs to the L/F-transferase family.

It localises to the cytoplasm. It carries out the reaction N-terminal L-lysyl-[protein] + L-leucyl-tRNA(Leu) = N-terminal L-leucyl-L-lysyl-[protein] + tRNA(Leu) + H(+). The catalysed reaction is N-terminal L-arginyl-[protein] + L-leucyl-tRNA(Leu) = N-terminal L-leucyl-L-arginyl-[protein] + tRNA(Leu) + H(+). It catalyses the reaction L-phenylalanyl-tRNA(Phe) + an N-terminal L-alpha-aminoacyl-[protein] = an N-terminal L-phenylalanyl-L-alpha-aminoacyl-[protein] + tRNA(Phe). Functions in the N-end rule pathway of protein degradation where it conjugates Leu, Phe and, less efficiently, Met from aminoacyl-tRNAs to the N-termini of proteins containing an N-terminal arginine or lysine. The sequence is that of Leucyl/phenylalanyl-tRNA--protein transferase from Sinorhizobium medicae (strain WSM419) (Ensifer medicae).